A 466-amino-acid polypeptide reads, in one-letter code: ATP synthase subunit beta (466 aa).

Residue Gly155–Thr162 coordinates ATP.

This sequence belongs to the ATPase alpha/beta chains family. In terms of assembly, F-type ATPases have 2 components, CF(1) - the catalytic core - and CF(0) - the membrane proton channel. CF(1) has five subunits: alpha(3), beta(3), gamma(1), delta(1), epsilon(1). CF(0) has three main subunits: a(1), b(2) and c(9-12). The alpha and beta chains form an alternating ring which encloses part of the gamma chain. CF(1) is attached to CF(0) by a central stalk formed by the gamma and epsilon chains, while a peripheral stalk is formed by the delta and b chains.

It is found in the cell inner membrane. It carries out the reaction ATP + H2O + 4 H(+)(in) = ADP + phosphate + 5 H(+)(out). Produces ATP from ADP in the presence of a proton gradient across the membrane. The catalytic sites are hosted primarily by the beta subunits. In Aromatoleum aromaticum (strain DSM 19018 / LMG 30748 / EbN1) (Azoarcus sp. (strain EbN1)), this protein is ATP synthase subunit beta.